Here is a 275-residue protein sequence, read N- to C-terminus: Large ribosomal subunit protein uL2 (275 aa).

Disordered regions lie at residues 38-59 (TRGS…GGHK) and 223-275 (VAMN…RKRK). The segment covering 50 to 59 (TVRHRGGGHK) has biased composition (basic residues). The segment covering 229 to 244 (DHPHGGGEGRTGEARE) has biased composition (basic and acidic residues).

The protein belongs to the universal ribosomal protein uL2 family. As to quaternary structure, part of the 50S ribosomal subunit. Forms a bridge to the 30S subunit in the 70S ribosome.

Its function is as follows. One of the primary rRNA binding proteins. Required for association of the 30S and 50S subunits to form the 70S ribosome, for tRNA binding and peptide bond formation. It has been suggested to have peptidyltransferase activity; this is somewhat controversial. Makes several contacts with the 16S rRNA in the 70S ribosome. The chain is Large ribosomal subunit protein uL2 from Bordetella bronchiseptica (strain ATCC BAA-588 / NCTC 13252 / RB50) (Alcaligenes bronchisepticus).